Consider the following 207-residue polypeptide: Dephospho-CoA kinase (207 aa).

A DPCK domain is found at 4–204; it reads VVGLTGGIGS…HLYLQFAEIF (201 aa). Residue 12 to 17 coordinates ATP; that stretch reads GSGKST.

The protein belongs to the CoaE family.

The protein localises to the cytoplasm. It carries out the reaction 3'-dephospho-CoA + ATP = ADP + CoA + H(+). The protein operates within cofactor biosynthesis; coenzyme A biosynthesis; CoA from (R)-pantothenate: step 5/5. Functionally, catalyzes the phosphorylation of the 3'-hydroxyl group of dephosphocoenzyme A to form coenzyme A. In Aggregatibacter actinomycetemcomitans (Actinobacillus actinomycetemcomitans), this protein is Dephospho-CoA kinase.